Consider the following 453-residue polypeptide: Presenilin-like protein At1g08700 (453 aa).

The Cytoplasmic segment spans residues 1–8 (MESSILDS). Residues 9–29 (LGVEIIGVMAPVSICMFLVVL) traverse the membrane as a helical segment. Topologically, residues 30 to 68 (LTYSLSVTSDPQIRSAANLIYIENPSDSTTVKLEGSLAN) are lumenal. Residues 69–89 (AIVFVVLIAAVTFILVLLFYY) traverse the membrane as a helical segment. At 90–103 (NFTNFLKHYMRFSA) the chain is on the cytoplasmic side. Residues 104–124 (FFVLGTMGGAIFLSIIQHFSI) traverse the membrane as a helical segment. Topologically, residues 125 to 132 (PVDSITCF) are lumenal. The chain crosses the membrane as a helical span at residues 133-153 (ILLFNFTILGTLSVFAGGIPI). Residues 154–159 (VLRQCY) are Cytoplasmic-facing. 2 consecutive transmembrane segments (helical) span residues 160 to 180 (MVVM…WTTW) and 181 to 201 (FILV…GGPL). Aspartate 190 is a catalytic residue. The Cytoplasmic portion of the chain corresponds to 202-369 (KLLVELASSR…VVDISNRGIK (168 aa)). 2 disordered regions span residues 226–248 (VSSG…GGGV) and 292–329 (IGNG…DRES). The segment covering 227 to 240 (SSGNQRRNRGSSLR) has biased composition (low complexity). Serine 296 carries the post-translational modification Phosphoserine. Over residues 309 to 320 (PSASEHSTSVGT) the composition is skewed to polar residues. Residues 370–390 (LGLGDFIFYSVLVGRAAMYDL) form a helical membrane-spanning segment. Aspartate 374 is an active-site residue. The Lumenal portion of the chain corresponds to 391-392 (MT). Residues 393-413 (VYACYLAIISGLGCTLILLSV) traverse the membrane as a helical segment. Topologically, residues 414–417 (YNRA) are cytoplasmic. An intramembrane region (helical) is located at residues 418 to 438 (LPALPISIMLGVVFYFLTRLL). The PAL signature appears at 419 to 421 (PAL). Residues 439–453 (MEPFVVGVTTNLMMF) lie on the Cytoplasmic side of the membrane.

The protein belongs to the peptidase A22A family. In terms of assembly, homodimer. Probable component of the gamma-secretase complex, a complex composed of a presenilin homodimer, nicastrin, APH1 and PEN2.

The protein resides in the endoplasmic reticulum membrane. Its subcellular location is the golgi apparatus membrane. Probable subunit of the gamma-secretase complex, an endoprotease complex that catalyzes the intramembrane cleavage of integral membrane proteins such as Notch receptors. The chain is Presenilin-like protein At1g08700 from Arabidopsis thaliana (Mouse-ear cress).